A 145-amino-acid chain; its full sequence is LIRP (145 aa).

A signal peptide (or 22) is located at residues 1–19 (MWKLCLRLLAVLAVCLSTA). 2 propeptides span residues 20–33 (TQAQ…SPKR) and 117–122 (FRRRTR). Disulfide bonds link Cys-44–Cys-129, Cys-56–Cys-142, and Cys-128–Cys-133.

This sequence belongs to the insulin family. Heterodimer of a B chain and an A chain linked by two disulfide bonds.

It is found in the secreted. The protein is LIRP of Locusta migratoria (Migratory locust).